A 360-amino-acid polypeptide reads, in one-letter code: Decorin (360 aa).

Residues 1–16 (MKATIIFLLLAQVSWA) form the signal peptide. Positions 17–30 (GPFQQRGLFDFMLE) are excised as a propeptide. O-linked (Xyl...) (glycosaminoglycan) serine glycosylation occurs at S34. Cystine bridges form between C55/C61 and C59/C68. LRR repeat units lie at residues 74-94 (DKVP…NNKI), 95-118 (TEIK…NNKI), 119-142 (SKIS…KNHL), 143-163 (KELP…ENEI), 164-187 (TKVR…TNPL), 188-213 (KSSG…DTNI), 214-234 (TTIP…GNKI), 235-258 (TKVD…FNSI), 259-282 (SAVD…NNKL), 283-305 (IRVP…NNNI), 306-335 (SAVG…SNPV), and 336-360 (QYWE…GNYK). N-linked (GlcNAc...) asparagine glycosylation is present at N212. N-linked (GlcNAc...) asparagine glycosylation is found at N263 and N304. Residues C314 and C347 are joined by a disulfide bond.

Belongs to the small leucine-rich proteoglycan (SLRP) family. SLRP class I subfamily. As to quaternary structure, binds to type I and type II collagen, fibronectin and TGF-beta. Forms a ternary complex with MFAP2 and ELN. Interacts with DPT. The attached glycosaminoglycan chain can be either chondroitin sulfate or dermatan sulfate depending upon the tissue of origin.

It is found in the secreted. It localises to the extracellular space. Its subcellular location is the extracellular matrix. Its function is as follows. May affect the rate of fibrils formation. In Canis lupus familiaris (Dog), this protein is Decorin (DCN).